The chain runs to 41 residues: Alpha-conotoxin TxIB (41 aa).

A propeptide spanning residues 1 to 20 (FDGRNTSANNKATDLMALPV) is cleaved from the precursor. Disulfide bonds link Cys-23–Cys-29 and Cys-24–Cys-37. The interval 25 to 27 (SDP) is ser-Xaa-Pro motif, crucial for potent interaction with nAChR. Position 37 is a cysteine amide; in Alpha-conotoxin TxIB (Cys-37). The propeptide occupies 39–41 (GRR).

Belongs to the conotoxin A superfamily. Expressed by the venom duct.

It localises to the secreted. In terms of biological role, alpha-conotoxins act on postsynaptic membranes, they bind to the nicotinic acetylcholine receptors (nAChR) and thus inhibit them. This conotoxin is a subtype-specific blocker of alpha-6/alpha-3-beta-2-beta-3 (CHRNA6/CHRNA3-CHRNB2-CHRNB3) nAChRs nicotinic acetylcholine receptors (nAChRs) (IC(50)=28.4 nM). The polypeptide is Alpha-conotoxin TxIB (Conus textile (Cloth-of-gold cone)).